Here is a 312-residue protein sequence, read N- to C-terminus: uncharacterized protein (312 aa).

112–118 (LIGLPMV) lines the ATP pocket.

This sequence belongs to the MurCDEF family.

This is an uncharacterized protein from Methanothermobacter thermautotrophicus (strain ATCC 29096 / DSM 1053 / JCM 10044 / NBRC 100330 / Delta H) (Methanobacterium thermoautotrophicum).